The sequence spans 182 residues: Small ribosomal subunit protein uS4c (182 aa).

The S4 RNA-binding domain maps to 82–143 (MRLDNILFRL…KQRSKALIQN (62 aa)).

It belongs to the universal ribosomal protein uS4 family. As to quaternary structure, part of the 30S ribosomal subunit. Contacts protein S5. The interaction surface between S4 and S5 is involved in control of translational fidelity.

The protein localises to the plastid. Its subcellular location is the chloroplast. One of the primary rRNA binding proteins, it binds directly to 16S rRNA where it nucleates assembly of the body of the 30S subunit. In terms of biological role, with S5 and S12 plays an important role in translational accuracy. This is Small ribosomal subunit protein uS4c (rps4) from Iris domestica (Leopard lily).